Reading from the N-terminus, the 121-residue chain is Immunoglobulin kappa variable 4-1 (121 aa).

Residues 1–20 (MVLQTQVFISLLLWISGAYG) form the signal peptide. The segment at 21-43 (DIVMTQSPDSLAVSLGERATINC) is framework-1. In terms of domain architecture, Ig-like spans 21–121 (DIVMTQSPDS…YYCQQYYSTP (101 aa)). A disulfide bridge links C43 with C114. Positions 44 to 60 (KSSQSVLYSSNNKNYLA) are complementarity-determining-1. The framework-2 stretch occupies residues 61–75 (WYQQKPGQPPKLLIY). The segment at 76 to 82 (WASTRES) is complementarity-determining-2. Residues 83 to 114 (GVPDRFSGSGSGTDFTLTISSLQAEDVAVYYC) form a framework-3 region. The tract at residues 115–121 (QQYYSTP) is complementarity-determining-3.

In terms of assembly, immunoglobulins are composed of two identical heavy chains and two identical light chains; disulfide-linked.

It localises to the secreted. The protein resides in the cell membrane. Its function is as follows. V segment of the variable domain of immunoglobulins light chain that participates in the antigen recognition. Immunoglobulins, also known as antibodies, are membrane-bound or secreted glycoproteins produced by B lymphocytes. In the recognition phase of humoral immunity, the membrane-bound immunoglobulins serve as receptors which, upon binding of a specific antigen, trigger the clonal expansion and differentiation of B lymphocytes into immunoglobulins-secreting plasma cells. Secreted immunoglobulins mediate the effector phase of humoral immunity, which results in the elimination of bound antigens. The antigen binding site is formed by the variable domain of one heavy chain, together with that of its associated light chain. Thus, each immunoglobulin has two antigen binding sites with remarkable affinity for a particular antigen. The variable domains are assembled by a process called V-(D)-J rearrangement and can then be subjected to somatic hypermutations which, after exposure to antigen and selection, allow affinity maturation for a particular antigen. The sequence is that of Immunoglobulin kappa variable 4-1 from Homo sapiens (Human).